We begin with the raw amino-acid sequence, 24 residues long: Arginine attenuator peptide (24 aa).

It belongs to the arginine attenuator peptide family.

Its function is as follows. Arginine attenuator peptide (AAP) that has a regulatory role in the production of arginine-specific carbamoyl phosphate synthetase. Encoded by an upstream open reading frame (uORF) within the 5'-leader region of arginine-specific carbamoyl phosphate synthetase small chain (arg-2) mRNA, it attenuates the translation of the downstream arg-2 ORF. In the presence of high concentrations of arginine, ribosomes translating the uORF encoding AAP stall at the termination codon, resulting in reduced translation from the downstream arg-2 initiation codon. This is Arginine attenuator peptide from Neurospora crassa (strain ATCC 24698 / 74-OR23-1A / CBS 708.71 / DSM 1257 / FGSC 987).